The following is a 117-amino-acid chain: UPF0102 protein RHOS4_03930 (117 aa).

This sequence belongs to the UPF0102 family.

This chain is UPF0102 protein RHOS4_03930, found in Cereibacter sphaeroides (strain ATCC 17023 / DSM 158 / JCM 6121 / CCUG 31486 / LMG 2827 / NBRC 12203 / NCIMB 8253 / ATH 2.4.1.) (Rhodobacter sphaeroides).